Reading from the N-terminus, the 581-residue chain is Proline--tRNA ligase (581 aa).

This sequence belongs to the class-II aminoacyl-tRNA synthetase family. ProS type 1 subfamily. Homodimer.

It is found in the cytoplasm. It catalyses the reaction tRNA(Pro) + L-proline + ATP = L-prolyl-tRNA(Pro) + AMP + diphosphate. Catalyzes the attachment of proline to tRNA(Pro) in a two-step reaction: proline is first activated by ATP to form Pro-AMP and then transferred to the acceptor end of tRNA(Pro). As ProRS can inadvertently accommodate and process non-cognate amino acids such as alanine and cysteine, to avoid such errors it has two additional distinct editing activities against alanine. One activity is designated as 'pretransfer' editing and involves the tRNA(Pro)-independent hydrolysis of activated Ala-AMP. The other activity is designated 'posttransfer' editing and involves deacylation of mischarged Ala-tRNA(Pro). The misacylated Cys-tRNA(Pro) is not edited by ProRS. This Variovorax paradoxus (strain S110) protein is Proline--tRNA ligase.